We begin with the raw amino-acid sequence, 55 residues long: Large ribosomal subunit protein bL33 (55 aa).

The protein belongs to the bacterial ribosomal protein bL33 family.

This Photorhabdus laumondii subsp. laumondii (strain DSM 15139 / CIP 105565 / TT01) (Photorhabdus luminescens subsp. laumondii) protein is Large ribosomal subunit protein bL33.